The chain runs to 224 residues: Ribose-5-phosphate isomerase A (224 aa).

Substrate is bound by residues 32 to 35 (TGST), 85 to 88 (DGAD), and 98 to 101 (KGGG). Residue Glu107 is the Proton acceptor of the active site. Lys125 is a substrate binding site.

This sequence belongs to the ribose 5-phosphate isomerase family. In terms of assembly, homodimer.

It carries out the reaction aldehydo-D-ribose 5-phosphate = D-ribulose 5-phosphate. Its pathway is carbohydrate degradation; pentose phosphate pathway; D-ribose 5-phosphate from D-ribulose 5-phosphate (non-oxidative stage): step 1/1. Catalyzes the reversible conversion of ribose-5-phosphate to ribulose 5-phosphate. The sequence is that of Ribose-5-phosphate isomerase A from Pseudomonas putida (strain W619).